A 686-amino-acid polypeptide reads, in one-letter code: Rhophilin-2 (686 aa).

Residues 26–100 form the REM-1 domain; the sequence is NPLAQTGRSK…LEGLNISVGV (75 aa). Positions 46-66 are interaction with Rho; that stretch reads QILKAVRMRTGAENLLKVATN. One can recognise a BRO1 domain in the interval 111-460; the sequence is PLIPLGLKET…RLTYAQHQEE (350 aa). A PDZ domain is found at 515-593; that stretch reads RSIRFTAEEG…DEIEMKVVSL (79 aa). Thr655 is modified (phosphothreonine).

It belongs to the RHPN family. Interacts with GTP-bound RhoA and RhoB. Interacts with both GTP- and GDP-bound RhoA. According to PubMed:12473120, it does not interact with RhoA. Interacts with KRT18. In terms of tissue distribution, widely expressed. Highly expressed in prostate, trachea, stomach, colon, thyroid and pancreas. Expressed at lower level in brain, spinal cord, kidney, placenta and liver.

It is found in the cytoplasm. The protein localises to the perinuclear region. In terms of biological role, binds specifically to GTP-Rho. May function in a Rho pathway to limit stress fiber formation and/or increase the turnover of F-actin structures in the absence of high levels of RhoA activity. The protein is Rhophilin-2 (RHPN2) of Homo sapiens (Human).